Consider the following 173-residue polypeptide: Putative metal-dependent hydrolase BCE33L2441 (173 aa).

Positions 65, 156, and 160 each coordinate Zn(2+).

Belongs to the metal hydrolase YfiT family. As to quaternary structure, homodimer. Zn(2+) serves as cofactor.

Its subcellular location is the cytoplasm. Functionally, possible metal-dependent hydrolase. This is Putative metal-dependent hydrolase BCE33L2441 from Bacillus cereus (strain ZK / E33L).